The primary structure comprises 591 residues: Aspartate--tRNA ligase (591 aa).

Glutamate 171 is an L-aspartate binding site. Residues 195-198 (QLFK) are aspartate. Arginine 217 is an L-aspartate binding site. ATP-binding positions include 217 to 219 (RDE) and glutamine 226. Residue histidine 448 coordinates L-aspartate. Glutamate 482 lines the ATP pocket. Arginine 489 is a binding site for L-aspartate. Residue 534–537 (GLDR) coordinates ATP.

The protein belongs to the class-II aminoacyl-tRNA synthetase family. Type 1 subfamily. In terms of assembly, homodimer.

It is found in the cytoplasm. It carries out the reaction tRNA(Asp) + L-aspartate + ATP = L-aspartyl-tRNA(Asp) + AMP + diphosphate. Functionally, catalyzes the attachment of L-aspartate to tRNA(Asp) in a two-step reaction: L-aspartate is first activated by ATP to form Asp-AMP and then transferred to the acceptor end of tRNA(Asp). This is Aspartate--tRNA ligase from Vibrio cholerae serotype O1 (strain ATCC 39541 / Classical Ogawa 395 / O395).